We begin with the raw amino-acid sequence, 500 residues long: Probable cytosol aminopeptidase (500 aa).

Mn(2+) contacts are provided by K267 and D272. The active site involves K279. D290, D349, and E351 together coordinate Mn(2+). Residue R353 is part of the active site.

This sequence belongs to the peptidase M17 family. Mn(2+) is required as a cofactor.

Its subcellular location is the cytoplasm. It carries out the reaction Release of an N-terminal amino acid, Xaa-|-Yaa-, in which Xaa is preferably Leu, but may be other amino acids including Pro although not Arg or Lys, and Yaa may be Pro. Amino acid amides and methyl esters are also readily hydrolyzed, but rates on arylamides are exceedingly low.. It catalyses the reaction Release of an N-terminal amino acid, preferentially leucine, but not glutamic or aspartic acids.. Presumably involved in the processing and regular turnover of intracellular proteins. Catalyzes the removal of unsubstituted N-terminal amino acids from various peptides. This chain is Probable cytosol aminopeptidase, found in Tolumonas auensis (strain DSM 9187 / NBRC 110442 / TA 4).